The primary structure comprises 635 residues: Extracellular metalloproteinase mep (635 aa).

A signal peptide spans 1–19 (MMRGLLLAGALGLPLAVLA). Residues 20 to 246 (HPTHHAHGLQ…VHGVVDYVAE (227 aa)) constitute a propeptide that is removed on maturation. Residue Asn287 is glycosylated (N-linked (GlcNAc...) asparagine). The span at 290-309 (TTRGNNGIAQSNPTGGSQYL) shows a compositional bias: polar residues. The tract at residues 290 to 311 (TTRGNNGIAQSNPTGGSQYLKN) is disordered. His430 contacts Zn(2+). Glu431 is a catalytic residue. A Zn(2+)-binding site is contributed by His434.

This sequence belongs to the peptidase M36 family. It depends on Zn(2+) as a cofactor.

Its subcellular location is the secreted. In terms of biological role, secreted metalloproteinase that allows assimilation of proteinaceous substrates. The polypeptide is Extracellular metalloproteinase mep (mep) (Aspergillus flavus (strain ATCC 200026 / FGSC A1120 / IAM 13836 / NRRL 3357 / JCM 12722 / SRRC 167)).